We begin with the raw amino-acid sequence, 113 residues long: Large ribosomal subunit protein uL22 (113 aa).

The protein belongs to the universal ribosomal protein uL22 family. In terms of assembly, part of the 50S ribosomal subunit.

Functionally, this protein binds specifically to 23S rRNA; its binding is stimulated by other ribosomal proteins, e.g. L4, L17, and L20. It is important during the early stages of 50S assembly. It makes multiple contacts with different domains of the 23S rRNA in the assembled 50S subunit and ribosome. The globular domain of the protein is located near the polypeptide exit tunnel on the outside of the subunit, while an extended beta-hairpin is found that lines the wall of the exit tunnel in the center of the 70S ribosome. This chain is Large ribosomal subunit protein uL22, found in Geobacillus kaustophilus (strain HTA426).